The following is a 343-amino-acid chain: ATPase GET3 (343 aa).

32–39 (KGGVGKTT) lines the ATP pocket. Aspartate 61 is an active-site residue. ATP-binding residues include glutamate 245 and asparagine 272. Residues cysteine 283 and cysteine 286 each contribute to the Zn(2+) site.

It belongs to the arsA ATPase family. In terms of assembly, homodimer.

It is found in the cytoplasm. The protein localises to the endoplasmic reticulum. Its function is as follows. ATPase required for the post-translational delivery of tail-anchored (TA) proteins to the endoplasmic reticulum. Recognizes and selectively binds the transmembrane domain of TA proteins in the cytosol. This complex then targets to the endoplasmic reticulum by membrane-bound receptors, where the tail-anchored protein is released for insertion. This process is regulated by ATP binding and hydrolysis. ATP binding drives the homodimer towards the closed dimer state, facilitating recognition of newly synthesized TA membrane proteins. ATP hydrolysis is required for insertion. Subsequently, the homodimer reverts towards the open dimer state, lowering its affinity for the membrane-bound receptor, and returning it to the cytosol to initiate a new round of targeting. In Pyricularia oryzae (strain 70-15 / ATCC MYA-4617 / FGSC 8958) (Rice blast fungus), this protein is ATPase GET3.